A 278-amino-acid chain; its full sequence is Sulfur carrier protein FdhD (278 aa).

The active-site Cysteine persulfide intermediate is Cys121. 260–265 (FCKPGR) lines the Mo-bis(molybdopterin guanine dinucleotide) pocket.

It belongs to the FdhD family.

The protein resides in the cytoplasm. In terms of biological role, required for formate dehydrogenase (FDH) activity. Acts as a sulfur carrier protein that transfers sulfur from IscS to the molybdenum cofactor prior to its insertion into FDH. This is Sulfur carrier protein FdhD from Salmonella heidelberg (strain SL476).